The sequence spans 403 residues: F-box protein At1g60400 (403 aa).

In terms of domain architecture, F-box spans 13 to 59; that stretch reads IDRLSALPEHLLCRILSELSTKDSVRTSVLSKHWRNLWLHVPVLELE.

This is F-box protein At1g60400 from Arabidopsis thaliana (Mouse-ear cress).